Consider the following 185-residue polypeptide: GTP cyclohydrolase 1 (185 aa).

C75, H78, and C146 together coordinate Zn(2+).

Belongs to the GTP cyclohydrolase I family. As to quaternary structure, homomer.

The catalysed reaction is GTP + H2O = 7,8-dihydroneopterin 3'-triphosphate + formate + H(+). It functions in the pathway cofactor biosynthesis; 7,8-dihydroneopterin triphosphate biosynthesis; 7,8-dihydroneopterin triphosphate from GTP: step 1/1. This Clostridium kluyveri (strain NBRC 12016) protein is GTP cyclohydrolase 1.